A 556-amino-acid chain; its full sequence is Glutamine--tRNA ligase (556 aa).

The 'HIGH' region signature appears at 34–44 (PEPNGYLHIGH). Residues 35-37 (EPN) and 41-47 (HIGHAKS) each bind ATP. L-glutamine is bound by residues D67 and Y212. ATP is bound by residues T231, 261–262 (RL), and 269–271 (MSK). Residues 268–272 (VMSKR) carry the 'KMSKS' region motif.

The protein belongs to the class-I aminoacyl-tRNA synthetase family. Monomer.

Its subcellular location is the cytoplasm. It carries out the reaction tRNA(Gln) + L-glutamine + ATP = L-glutaminyl-tRNA(Gln) + AMP + diphosphate. The protein is Glutamine--tRNA ligase of Vibrio campbellii (strain ATCC BAA-1116).